Reading from the N-terminus, the 703-residue chain is Protein teflon (703 aa).

Residues 32–55 (MFCHFCKDIFTHLPEFMRHLQWSH) form a C2H2-type 1 zinc finger. Disordered stretches follow at residues 78–111 (TSED…PGSS), 138–161 (SHEQ…ARKP), and 339–434 (SQQP…SKLE). 2 stretches are compositionally biased toward polar residues: residues 84–94 (QSQANSCSSGD) and 138–147 (SHEQSYSKTP). The segment covering 148–161 (PDSRTEGFRCARKP) has biased composition (basic and acidic residues). Composition is skewed to polar residues over residues 339-352 (SQQP…NNAV) and 364-373 (SLTVISSSPI). C2H2-type zinc fingers lie at residues 649–672 (YFCE…QSVH) and 677–700 (FTCS…KTVH).

It belongs to the Teflon family.

It is found in the nucleus. The protein resides in the chromosome. Its function is as follows. Specifically required in males for proper segregation of autosomal bivalents at meiosis I. Expression is required in the male germ line prior to spermatocyte stage S4. May have a role as a bridging molecule maintaining adhesion to hold autosome bivalents together via heterochromatic connections. This is Protein teflon from Drosophila pseudoobscura pseudoobscura (Fruit fly).